An 85-amino-acid chain; its full sequence is Large ribosomal subunit protein bL27 (85 aa).

Residues 1–21 form a disordered region; the sequence is MAHKKGVGSSRNGRDSDGQRL.

The protein belongs to the bacterial ribosomal protein bL27 family.

The sequence is that of Large ribosomal subunit protein bL27 from Geobacter sp. (strain M21).